A 275-amino-acid polypeptide reads, in one-letter code: DNA-directed RNA polymerase subunit Rpo3 (275 aa).

Belongs to the archaeal Rpo3/eukaryotic RPB3 RNA polymerase subunit family. Part of the RNA polymerase complex.

It is found in the cytoplasm. The enzyme catalyses RNA(n) + a ribonucleoside 5'-triphosphate = RNA(n+1) + diphosphate. In terms of biological role, DNA-dependent RNA polymerase (RNAP) catalyzes the transcription of DNA into RNA using the four ribonucleoside triphosphates as substrates. The polypeptide is DNA-directed RNA polymerase subunit Rpo3 (Methanopyrus kandleri (strain AV19 / DSM 6324 / JCM 9639 / NBRC 100938)).